The following is a 545-amino-acid chain: MKCHYEVLGVKRDASDDDLKKAYRKLALKWHPDKNLDNAEDAAEQFKLIQAAYDVLSDPQERAWYDNHREALLKGGVSGEYQDDSIDLVQFFTVTCYSGYGDDEKGFYAVYRNVFESIVKEEKEHSKDEEDEEDEFPSFGESESDYDTVVHLFYGYWQSFCTRKNFAWKEEYDTRQASNRWEKRAMEKENKKTRDKARKEHNELVRQLVAFVRKRDKRVQAHKKLVEEQNAEKAKKVEELRRKQKLSQAKLAEDYQEQSWTAMSELEKELQQMEAEYGQEFGDASDSEENEEELESRDIANVDGVDAVMADGAAEMDDYYDDLYCPACDKSFKSDKAMKNHSKSKKHREMVALLRQQLEEEDESLSQNCAEREEDDEEEDDDDDDEQNDTSKQKLSKRQKKKKRLQKPVNNLPEAPETVSPVPQSTEEHLSPAPDSGNTEDTPVPSEDPDDGVKPDGQENTNQKSTAKTKGKKGGKDSKKSSKAHGGVEAAPEKEVNLRCVTCQYEFTTRNKLFDHLKSTGHATALSSSNTSQTSKKKKDSRKNR.

The region spanning 3 to 69 (CHYEVLGVKR…QERAWYDNHR (67 aa)) is the J domain. 4 disordered regions span residues 122–141 (EKEHSKDEEDEEDEFPSFGE), 276–302 (EYGQEFGDASDSEENEEELESRDIANV), 331–497 (SFKS…KEVN), and 522–545 (HATALSSSNTSQTSKKKKDSRKNR). 2 stretches are compositionally biased toward acidic residues: residues 129–141 (EEDEEDEFPSFGE) and 283–295 (DASDSEENEEELE). Residues 180–286 (RWEKRAMEKE…YGQEFGDASD (107 aa)) adopt a coiled-coil conformation. Residues 323–347 (LYCPACDKSFKSDKAMKNHSKSKKH) form a C2H2-type 1 zinc finger. Basic residues predominate over residues 339 to 348 (KNHSKSKKHR). Residues 372–388 (REEDDEEEDDDDDDEQN) are compositionally biased toward acidic residues. Positions 394-406 (KLSKRQKKKKRLQ) are enriched in basic residues. A C2H2-type 2 zinc finger spans residues 498 to 522 (LRCVTCQYEFTTRNKLFDHLKSTGH). Residues 535–545 (SKKKKDSRKNR) show a composition bias toward basic residues.

In terms of biological role, may act as a co-chaperone for HSP70. This is DnaJ homolog subfamily C member 21 (dnajc21) from Danio rerio (Zebrafish).